We begin with the raw amino-acid sequence, 434 residues long: Glutamate-1-semialdehyde 2,1-aminomutase (434 aa).

Residue lysine 274 is modified to N6-(pyridoxal phosphate)lysine.

This sequence belongs to the class-III pyridoxal-phosphate-dependent aminotransferase family. HemL subfamily. As to quaternary structure, homodimer. The cofactor is pyridoxal 5'-phosphate.

It localises to the cytoplasm. It carries out the reaction (S)-4-amino-5-oxopentanoate = 5-aminolevulinate. Its pathway is porphyrin-containing compound metabolism; protoporphyrin-IX biosynthesis; 5-aminolevulinate from L-glutamyl-tRNA(Glu): step 2/2. This is Glutamate-1-semialdehyde 2,1-aminomutase from Acidovorax ebreus (strain TPSY) (Diaphorobacter sp. (strain TPSY)).